The primary structure comprises 150 residues: 3-hydroxyacyl-[acyl-carrier-protein] dehydratase FabZ (150 aa).

Residue His-51 is part of the active site.

It belongs to the thioester dehydratase family. FabZ subfamily.

It is found in the cytoplasm. The catalysed reaction is a (3R)-hydroxyacyl-[ACP] = a (2E)-enoyl-[ACP] + H2O. In terms of biological role, involved in unsaturated fatty acids biosynthesis. Catalyzes the dehydration of short chain beta-hydroxyacyl-ACPs and long chain saturated and unsaturated beta-hydroxyacyl-ACPs. This is 3-hydroxyacyl-[acyl-carrier-protein] dehydratase FabZ from Rubrobacter xylanophilus (strain DSM 9941 / JCM 11954 / NBRC 16129 / PRD-1).